The primary structure comprises 375 residues: Pectate lyase C (375 aa).

An N-terminal signal peptide occupies residues 1–22; the sequence is MKSLITPITAGLLLALSQPLLA. An intrachain disulfide couples cysteine 94 to cysteine 177. The Ca(2+) site is built by aspartate 151, aspartate 153, glutamate 188, and aspartate 192. The active site involves arginine 240. An intrachain disulfide couples cysteine 351 to cysteine 374.

The protein belongs to the polysaccharide lyase 1 family. PLADES subfamily. Requires Ca(2+) as cofactor.

It is found in the secreted. The catalysed reaction is Eliminative cleavage of (1-&gt;4)-alpha-D-galacturonan to give oligosaccharides with 4-deoxy-alpha-D-galact-4-enuronosyl groups at their non-reducing ends.. It participates in glycan metabolism; pectin degradation; 2-dehydro-3-deoxy-D-gluconate from pectin: step 2/5. In terms of biological role, involved in maceration and soft-rotting of plant tissue. In Dickeya chrysanthemi (Pectobacterium chrysanthemi), this protein is Pectate lyase C.